Reading from the N-terminus, the 306-residue chain is ATP phosphoribosyltransferase (306 aa).

It belongs to the ATP phosphoribosyltransferase family.

Its subcellular location is the cytoplasm. It carries out the reaction 1-(5-phospho-beta-D-ribosyl)-ATP + diphosphate = 5-phospho-alpha-D-ribose 1-diphosphate + ATP. It functions in the pathway amino-acid biosynthesis; L-histidine biosynthesis; L-histidine from 5-phospho-alpha-D-ribose 1-diphosphate: step 1/9. In terms of biological role, catalyzes the condensation of ATP and 5-phosphoribose 1-diphosphate to form N'-(5'-phosphoribosyl)-ATP (PR-ATP). Has a crucial role in the pathway because the rate of histidine biosynthesis seems to be controlled primarily by regulation of the enzymatic activity. In Candida glabrata (strain ATCC 2001 / BCRC 20586 / JCM 3761 / NBRC 0622 / NRRL Y-65 / CBS 138) (Yeast), this protein is ATP phosphoribosyltransferase (HIS1).